The primary structure comprises 131 residues: MKIMITISENSEAKELMPIAQAVHILVNKLPVAMRSKNKPGVRLEKGEVVDTNYEGYVLKVAIEKGEVVRATPIIGPYAGLPVIVAPIKDGDNVLGAIGVVDITAGIFEDIVAISRRPELYKFLPEDAFPK.

The next 2 membrane-spanning stretches (helical) occupy residues 68–88 and 94–114; these read VVRATPIIGPYAGLPVIVAPI and VLGAIGVVDITAGIFEDIVAI.

Its subcellular location is the cell membrane. This is an uncharacterized protein from Methanocaldococcus jannaschii (strain ATCC 43067 / DSM 2661 / JAL-1 / JCM 10045 / NBRC 100440) (Methanococcus jannaschii).